The following is a 153-amino-acid chain: UPF0260 protein YcgN (153 aa).

Belongs to the UPF0260 family.

The chain is UPF0260 protein YcgN from Shigella flexneri serotype 5b (strain 8401).